A 20-amino-acid polypeptide reads, in one-letter code: FIGAALGALTAIPSIIKLFK.

K20 carries the lysine amide modification.

It belongs to the non-disulfide-bridged peptide (NDBP) superfamily. Medium-length antimicrobial peptide (group 3) family. Ponericin-W subfamily. In terms of tissue distribution, expressed by the venom gland.

Its subcellular location is the secreted. It localises to the target cell membrane. In terms of biological role, has activity against Gram-positive bacteria. Has insecticidal and hemolytic activities. May act by disrupting the integrity of the bacterial cell membrane. This Neoponera inversa (Ant) protein is U1-poneritoxin-Ni1a.